A 474-amino-acid chain; its full sequence is L-arabinose isomerase (474 aa).

4 residues coordinate Mn(2+): Glu-306, Glu-331, His-348, and His-447.

This sequence belongs to the arabinose isomerase family. Mn(2+) is required as a cofactor.

The catalysed reaction is beta-L-arabinopyranose = L-ribulose. It functions in the pathway carbohydrate degradation; L-arabinose degradation via L-ribulose; D-xylulose 5-phosphate from L-arabinose (bacterial route): step 1/3. Functionally, catalyzes the conversion of L-arabinose to L-ribulose. This chain is L-arabinose isomerase, found in Levilactobacillus brevis (strain ATCC 367 / BCRC 12310 / CIP 105137 / JCM 1170 / LMG 11437 / NCIMB 947 / NCTC 947) (Lactobacillus brevis).